Here is a 1849-residue protein sequence, read N- to C-terminus: TATA-binding protein-associated factor 172 (1849 aa).

A disordered region spans residues 77-97; that stretch reads NPVPRTRQEPTSESSMEDSPT. Residues 85 to 97 are compositionally biased toward polar residues; sequence EPTSESSMEDSPT. Ser-91 and Ser-95 each carry phosphoserine. The short motif at 191-207 is the Nuclear localization signal element; that stretch reads QAAELIDSEFRAGMSNR. The interval 219-247 is disordered; it reads FAKQRSRDAVETNEKSNDSTDGEPEEKRR. The segment covering 223–236 has biased composition (basic and acidic residues); the sequence is RSRDAVETNEKSND. 8 HEAT repeats span residues 385-422, 426-463, 513-550, 554-596, 818-855, 872-910, 1102-1139, and 1182-1219; these read TGVH…VRQD, TLLP…SLVY, QSLT…TQDQ, SWLI…KASV, TSSF…LQLR, EKLN…QCTT, PLLV…IATM, and PYIV…LMPL. One can recognise a Helicase ATP-binding domain in the interval 1278 to 1453; that stretch reads AFLNKYKLHG…WSLFDFLMPG (176 aa). Residue 1291–1298 coordinates ATP; that stretch reads DDMGLGKT. The DEGH box signature appears at 1404-1407; sequence DEGH. The region spanning 1636 to 1790 is the Helicase C-terminal domain; the sequence is SGTESVVAQH…QENSSLQSMG (155 aa).

This sequence belongs to the SNF2/RAD54 helicase family. As to quaternary structure, associates with TBP to form B-TFIID. Binds DRAP1.

The protein resides in the nucleus. Functionally, regulates transcription in association with TATA binding protein (TBP). Removes TBP from the TATA box in an ATP-dependent manner. In Homo sapiens (Human), this protein is TATA-binding protein-associated factor 172 (BTAF1).